The primary structure comprises 145 residues: Ribosomal RNA large subunit methyltransferase H (145 aa).

S-adenosyl-L-methionine-binding positions include Leu-64, Gly-93, and 112–117; that span reads LSPLTF.

The protein belongs to the RNA methyltransferase RlmH family. As to quaternary structure, homodimer.

The protein resides in the cytoplasm. It carries out the reaction pseudouridine(1915) in 23S rRNA + S-adenosyl-L-methionine = N(3)-methylpseudouridine(1915) in 23S rRNA + S-adenosyl-L-homocysteine + H(+). Specifically methylates the pseudouridine at position 1915 (m3Psi1915) in 23S rRNA. The sequence is that of Ribosomal RNA large subunit methyltransferase H from Prochlorococcus marinus (strain MIT 9211).